Reading from the N-terminus, the 318-residue chain is Receptor homology region, transmembrane domain- and RING domain-containing protein 6 (318 aa).

The signal sequence occupies residues 1 to 20 (MNGSWITILSLLVISQLASS). Residues 22-162 (VTLIGKNTFL…LIPGFGISSW (141 aa)) lie on the Lumenal side of the membrane. Cysteines 62 and 87 form a disulfide. The region spanning 70-143 (EKGSKFRPSY…RTSGEVLKEY (74 aa)) is the PA domain. An N-linked (GlcNAc...) asparagine glycan is attached at Asn121. A helical transmembrane segment spans residues 163 to 183 (SIMAITFVSLLVISAVLASYF). At 184–318 (SVRRHRIRQH…DLPIVVRVYL (135 aa)) the chain is on the cytoplasmic side. The segment at 233–275 (CAICIDDYRVGEILRILPCKHKYHAVCIDSWLGRCRSFCPVCK) adopts an RING-type; atypical zinc-finger fold.

It is found in the prevacuolar compartment membrane. Its subcellular location is the protein storage vacuole membrane. Functionally, involved in the trafficking of vacuolar proteins. May function as a sorting receptor for protein trafficking to the protein storage vacuole (PSV). The protein is Receptor homology region, transmembrane domain- and RING domain-containing protein 6 (RMR6) of Arabidopsis thaliana (Mouse-ear cress).